The sequence spans 442 residues: Na(+)/H(+) antiporter NhaA (442 aa).

The next 11 helical transmembrane spans lie at 32-52 (IGGG…NSPW), 73-93 (LTLA…VAGL), 111-131 (AVPV…YALV), 139-159 (AGWA…LAVI), 170-190 (FLLT…AVVY), 193-213 (HLSI…TLLV), 234-254 (VHAS…AVPV), 284-304 (VAVP…LSGL), 316-336 (VVLG…FLVA), 352-372 (VLGL…IGEL), and 383-403 (HVKI…AVVL). Basic and acidic residues predominate over residues 423–435 (HDGIPDVYQDLHR). The segment at 423 to 442 (HDGIPDVYQDLHRSSPRPWG) is disordered.

The protein belongs to the NhaA Na(+)/H(+) (TC 2.A.33) antiporter family.

The protein resides in the cell membrane. It catalyses the reaction Na(+)(in) + 2 H(+)(out) = Na(+)(out) + 2 H(+)(in). Functionally, na(+)/H(+) antiporter that extrudes sodium in exchange for external protons. In Frankia casuarinae (strain DSM 45818 / CECT 9043 / HFP020203 / CcI3), this protein is Na(+)/H(+) antiporter NhaA.